Reading from the N-terminus, the 604-residue chain is Proline--tRNA ligase (604 aa).

This sequence belongs to the class-II aminoacyl-tRNA synthetase family. ProS type 1 subfamily. Homodimer.

It localises to the cytoplasm. It carries out the reaction tRNA(Pro) + L-proline + ATP = L-prolyl-tRNA(Pro) + AMP + diphosphate. Its function is as follows. Catalyzes the attachment of proline to tRNA(Pro) in a two-step reaction: proline is first activated by ATP to form Pro-AMP and then transferred to the acceptor end of tRNA(Pro). As ProRS can inadvertently accommodate and process non-cognate amino acids such as alanine and cysteine, to avoid such errors it has two additional distinct editing activities against alanine. One activity is designated as 'pretransfer' editing and involves the tRNA(Pro)-independent hydrolysis of activated Ala-AMP. The other activity is designated 'posttransfer' editing and involves deacylation of mischarged Ala-tRNA(Pro). The misacylated Cys-tRNA(Pro) is not edited by ProRS. This Nostoc punctiforme (strain ATCC 29133 / PCC 73102) protein is Proline--tRNA ligase.